We begin with the raw amino-acid sequence, 149 residues long: Transcriptional repressor NrdR (149 aa).

Residues 3-34 (CPFCAAVDTKVIDSRLVSDGSQVRRRRQCLDC) fold into a zinc finger. The 91-residue stretch at 49-139 (PRVIKSDDVR…VYRSFEDIRE (91 aa)) folds into the ATP-cone domain.

It belongs to the NrdR family. Zn(2+) serves as cofactor.

Its function is as follows. Negatively regulates transcription of bacterial ribonucleotide reductase nrd genes and operons by binding to NrdR-boxes. The polypeptide is Transcriptional repressor NrdR (Yersinia enterocolitica serotype O:8 / biotype 1B (strain NCTC 13174 / 8081)).